The following is a 336-amino-acid chain: UDP-N-acetylmuramoylpentapeptide-lysine N(6)-alanyltransferase (336 aa).

Substrate is bound by residues 37 to 40 (KNNW), Tyr-104, Arg-212, Tyr-216, and Tyr-257.

It belongs to the FemABX family.

The enzyme catalyses UDP-N-acetyl-alpha-D-muramoyl-L-alanyl-gamma-D-glutamyl-L-lysyl-D-alanyl-D-alanine + L-alanyl-tRNA(Ala) = UDP-N-acetyl-alpha-D-muramoyl-L-alanyl-gamma-D-glutamyl-N(6)-(L-alanyl)-L-lysyl-D-alanyl-D-alanine + tRNA(Ala) + H(+). Functionally, involved in the synthesis of the bacterial cell wall. Catalyzes the addition of alanine into the interchain peptide bridge of peptidoglycan precursor using aminoacyl-tRNA(Ala) as amino acid donor. This alanine is added to the epsilon-amino group of the L-lysine of the peptidoglycan UDP-N-acetyl-alpha-D-muramoyl-L-alanyl-D-glutamyl-L-lysyl-D-alanyl-D-alanine, in a ribosome-independent mechanism. Specific for UDP-N-acetyl-muramoyl-pentapeptide. Has no activity toward UDP-N-acetyl-muramoyl-tetrapeptide or UDP-N-acetyl-muramoyl-tripeptide. Also acts on L-seryl-tRNA(Ser). This is UDP-N-acetylmuramoylpentapeptide-lysine N(6)-alanyltransferase from Weissella viridescens (Lactobacillus viridescens).